Here is a 166-residue protein sequence, read N- to C-terminus: Thiol peroxidase (166 aa).

The Thioredoxin domain occupies 18 to 166 (LKVGDKAPDV…NYEALLKVLK (149 aa)). Residue cysteine 60 is the Cysteine sulfenic acid (-SOH) intermediate of the active site. The cysteines at positions 60 and 94 are disulfide-linked.

The protein belongs to the peroxiredoxin family. Tpx subfamily. In terms of assembly, homodimer.

It carries out the reaction a hydroperoxide + [thioredoxin]-dithiol = an alcohol + [thioredoxin]-disulfide + H2O. In terms of biological role, thiol-specific peroxidase that catalyzes the reduction of hydrogen peroxide and organic hydroperoxides to water and alcohols, respectively. Plays a role in cell protection against oxidative stress by detoxifying peroxides. This chain is Thiol peroxidase, found in Helicobacter pylori (strain ATCC 700392 / 26695) (Campylobacter pylori).